A 266-amino-acid chain; its full sequence is Glucosamine-6-phosphate deaminase (266 aa).

Asp72 serves as the catalytic Proton acceptor; for enolization step. Residue Asp141 is the For ring-opening step of the active site. The active-site Proton acceptor; for ring-opening step is the His143. Glu148 (for ring-opening step) is an active-site residue.

It belongs to the glucosamine/galactosamine-6-phosphate isomerase family. NagB subfamily. Homohexamer; trimer of disulfide-linked dimers.

It catalyses the reaction alpha-D-glucosamine 6-phosphate + H2O = beta-D-fructose 6-phosphate + NH4(+). Its pathway is amino-sugar metabolism; N-acetylneuraminate degradation; D-fructose 6-phosphate from N-acetylneuraminate: step 5/5. Its activity is regulated as follows. Allosterically activated by N-acetylglucosamine 6-phosphate (GlcNAc6P). Catalyzes the reversible isomerization-deamination of glucosamine 6-phosphate (GlcN6P) to form fructose 6-phosphate (Fru6P) and ammonium ion. This chain is Glucosamine-6-phosphate deaminase, found in Shigella boydii serotype 18 (strain CDC 3083-94 / BS512).